A 174-amino-acid chain; its full sequence is Cell division protein FtsL (174 aa).

Residues 1–38 are Cytoplasmic-facing; that stretch reads MLAAPRELSYIPQPVVSSKQSPRSGLSNRRRESRARQK. The chain crosses the membrane as a helical span at residues 39-59; sequence ILLLGLVLMGFVIGLSLTFLT. Topologically, residues 60–174 are extracellular; it reads MQVLIKGYKI…EPARQAGAGV (115 aa).

The protein belongs to the FtsL family.

The protein resides in the cell membrane. Functionally, essential cell division protein. This chain is Cell division protein FtsL, found in Moorella thermoacetica (strain ATCC 39073 / JCM 9320).